Here is a 383-residue protein sequence, read N- to C-terminus: Cytochrome b (383 aa).

The next 4 helical transmembrane spans lie at 34-54 (FGSLLGLTLMIQILTGVFLMM), 78-99 (WLIRSFHTNGASIFFMFIFLHI), 114-134 (WNVGVIMLFLLMATAFMGYVL), and 179-199 (FTALHFLLPFIILALLITHLI). Heme b is bound by residues His84 and His98. 2 residues coordinate heme b: His183 and His197. His202 lines the a ubiquinone pocket. 4 consecutive transmembrane segments (helical) span residues 227–247 (MKDVLGAVLAASMLLTLALYL), 289–309 (LGGVLAMFSSIFILLLIPFLH), 321–341 (LSQLLFWTLILNFLALTWIGG), and 348–368 (YILLGQITSLLYFITILILMP).

The protein belongs to the cytochrome b family. In terms of assembly, the cytochrome bc1 complex contains 3 respiratory subunits (MT-CYB, CYC1 and UQCRFS1), 2 core proteins (UQCRC1 and UQCRC2) and probably 6 low-molecular weight proteins. Heme b is required as a cofactor.

It is found in the mitochondrion inner membrane. In terms of biological role, component of the ubiquinol-cytochrome c reductase complex (complex III or cytochrome b-c1 complex) that is part of the mitochondrial respiratory chain. The b-c1 complex mediates electron transfer from ubiquinol to cytochrome c. Contributes to the generation of a proton gradient across the mitochondrial membrane that is then used for ATP synthesis. This chain is Cytochrome b (MT-CYB), found in Caiman crocodilus (Spectacled caiman).